Consider the following 364-residue polypeptide: Dual-specificity RNA methyltransferase RlmN (364 aa).

Glutamate 91 serves as the catalytic Proton acceptor. The Radical SAM core domain occupies glutamate 97 to aspartate 333. The cysteines at positions 104 and 338 are disulfide-linked. [4Fe-4S] cluster is bound by residues cysteine 111, cysteine 115, and cysteine 118. S-adenosyl-L-methionine is bound by residues glycine 164–glutamate 165, serine 196, serine 218–histidine 220, and asparagine 295. Cysteine 338 (S-methylcysteine intermediate) is an active-site residue.

It belongs to the radical SAM superfamily. RlmN family. It depends on [4Fe-4S] cluster as a cofactor.

Its subcellular location is the cytoplasm. The enzyme catalyses adenosine(2503) in 23S rRNA + 2 reduced [2Fe-2S]-[ferredoxin] + 2 S-adenosyl-L-methionine = 2-methyladenosine(2503) in 23S rRNA + 5'-deoxyadenosine + L-methionine + 2 oxidized [2Fe-2S]-[ferredoxin] + S-adenosyl-L-homocysteine. It carries out the reaction adenosine(37) in tRNA + 2 reduced [2Fe-2S]-[ferredoxin] + 2 S-adenosyl-L-methionine = 2-methyladenosine(37) in tRNA + 5'-deoxyadenosine + L-methionine + 2 oxidized [2Fe-2S]-[ferredoxin] + S-adenosyl-L-homocysteine. Specifically methylates position 2 of adenine 2503 in 23S rRNA and position 2 of adenine 37 in tRNAs. m2A2503 modification seems to play a crucial role in the proofreading step occurring at the peptidyl transferase center and thus would serve to optimize ribosomal fidelity. This Neisseria meningitidis serogroup C / serotype 2a (strain ATCC 700532 / DSM 15464 / FAM18) protein is Dual-specificity RNA methyltransferase RlmN.